The following is a 168-amino-acid chain: 2-C-methyl-D-erythritol 2,4-cyclodiphosphate synthase (168 aa).

The a divalent metal cation site is built by aspartate 13 and histidine 15. 4-CDP-2-C-methyl-D-erythritol 2-phosphate contacts are provided by residues 13-15 (DVH) and 39-40 (HS). Histidine 47 is a binding site for a divalent metal cation. 4-CDP-2-C-methyl-D-erythritol 2-phosphate contacts are provided by residues 61-63 (DIG), 66-70 (FPDTD), phenylalanine 144, and lysine 147.

The protein belongs to the IspF family. In terms of assembly, homotrimer. A divalent metal cation serves as cofactor.

It catalyses the reaction 4-CDP-2-C-methyl-D-erythritol 2-phosphate = 2-C-methyl-D-erythritol 2,4-cyclic diphosphate + CMP. The protein operates within isoprenoid biosynthesis; isopentenyl diphosphate biosynthesis via DXP pathway; isopentenyl diphosphate from 1-deoxy-D-xylulose 5-phosphate: step 4/6. Its function is as follows. Involved in the biosynthesis of isopentenyl diphosphate (IPP) and dimethylallyl diphosphate (DMAPP), two major building blocks of isoprenoid compounds. Catalyzes the conversion of 4-diphosphocytidyl-2-C-methyl-D-erythritol 2-phosphate (CDP-ME2P) to 2-C-methyl-D-erythritol 2,4-cyclodiphosphate (ME-CPP) with a corresponding release of cytidine 5-monophosphate (CMP). This chain is 2-C-methyl-D-erythritol 2,4-cyclodiphosphate synthase, found in Cupriavidus metallidurans (strain ATCC 43123 / DSM 2839 / NBRC 102507 / CH34) (Ralstonia metallidurans).